An 83-amino-acid chain; its full sequence is Small ribosomal subunit protein bS20 (83 aa).

This sequence belongs to the bacterial ribosomal protein bS20 family.

Its function is as follows. Binds directly to 16S ribosomal RNA. The polypeptide is Small ribosomal subunit protein bS20 (Flavobacterium psychrophilum (strain ATCC 49511 / DSM 21280 / CIP 103535 / JIP02/86)).